The chain runs to 414 residues: NAD-specific glutamate dehydrogenase (414 aa).

K70 and K94 together coordinate substrate. Catalysis depends on K106, which acts as the Proton donor. Residues T190 and N221 each coordinate NAD(+). S348 is a binding site for substrate.

It belongs to the Glu/Leu/Phe/Val dehydrogenases family. Homohexamer.

It catalyses the reaction L-glutamate + NAD(+) + H2O = 2-oxoglutarate + NH4(+) + NADH + H(+). This Staphylococcus aureus (strain COL) protein is NAD-specific glutamate dehydrogenase (gluD).